Consider the following 311-residue polypeptide: Aquaporin NIP3-1 (311 aa).

The disordered stretch occupies residues 1 to 34; sequence MEMAAPNGGGAAGMSSPVNGASAPATPGTPAPLF. Low complexity predominate over residues 20 to 34; the sequence is GASAPATPGTPAPLF. Helical transmembrane passes span 85–105 and 111–131; these read LGAE…APIV and GAIS…TIIL. Positions 142–144 match the NPA 1 motif; that stretch reads NPS. 3 helical membrane-spanning segments follow: residues 158–178, 202–222, and 226–246; these read LQVP…GFAL, AFFT…AVAT, and AVGE…ILIA. The short motif at 255 to 257 is the NPA 2 element; it reads NPV. Residues 273-293 traverse the membrane as a helical segment; the sequence is WIYLIAPTLGAVAGAGVYTAV.

Belongs to the MIP/aquaporin (TC 1.A.8) family. NIP (TC 1.A.8.12) subfamily. Expressed in roots and leaves.

It localises to the membrane. Aquaporins facilitate the transport of water and small neutral solutes across cell membranes. This chain is Aquaporin NIP3-1 (NIP3-1), found in Oryza sativa subsp. japonica (Rice).